We begin with the raw amino-acid sequence, 288 residues long: 33 kDa chaperonin (288 aa).

2 disulfide bridges follow: Cys236–Cys238 and Cys269–Cys272.

The protein belongs to the HSP33 family. Under oxidizing conditions two disulfide bonds are formed involving the reactive cysteines. Under reducing conditions zinc is bound to the reactive cysteines and the protein is inactive.

It is found in the cytoplasm. Its function is as follows. Redox regulated molecular chaperone. Protects both thermally unfolding and oxidatively damaged proteins from irreversible aggregation. Plays an important role in the bacterial defense system toward oxidative stress. This Lactococcus lactis subsp. cremoris (strain MG1363) protein is 33 kDa chaperonin.